Consider the following 263-residue polypeptide: uncharacterized protein (263 aa).

31 to 38 (GPTGSGKT) provides a ligand contact to ATP.

Belongs to the CbbQ/NirQ/NorQ/GpvN family.

This is an uncharacterized protein from Staphylococcus aureus (strain USA300).